The sequence spans 1606 residues: Pentafunctional AROM polypeptide (1606 aa).

The tract at residues 1–390 is 3-dehydroquinate synthase; that stretch reads MANADVLKVS…YEPKATVVPD (390 aa). Residues 45–47, 85–88, 116–118, and Asp-121 contribute to the NAD(+) site; these read DTN, ETSK, and GGV. Arg-132 serves as a coordination point for 7-phospho-2-dehydro-3-deoxy-D-arabino-heptonate. Position 141–142 (141–142) interacts with NAD(+); sequence TT. Residues Asp-148 and Lys-154 each coordinate 7-phospho-2-dehydro-3-deoxy-D-arabino-heptonate. Lys-163 provides a ligand contact to NAD(+). Residue Asn-164 participates in 7-phospho-2-dehydro-3-deoxy-D-arabino-heptonate binding. Residues 181 to 184 and Asn-192 contribute to the NAD(+) site; that span reads FLET. A Zn(2+)-binding site is contributed by Glu-196. 7-phospho-2-dehydro-3-deoxy-D-arabino-heptonate is bound by residues 196 to 199 and Lys-256; that span reads EVVK. Glu-266 serves as the catalytic Proton acceptor; for 3-dehydroquinate synthase activity. Residues 270–274 and His-277 contribute to the 7-phospho-2-dehydro-3-deoxy-D-arabino-heptonate site; that span reads RNLVN. Zn(2+) is bound at residue His-277. Catalysis depends on His-281, which acts as the Proton acceptor; for 3-dehydroquinate synthase activity. Positions 293 and 362 each coordinate 7-phospho-2-dehydro-3-deoxy-D-arabino-heptonate. His-293 provides a ligand contact to Zn(2+). Residues 403–850 are EPSP synthase; that stretch reads VIPGVPRHHP…WDDLENKIGL (448 aa). The active-site For EPSP synthase activity is Cys-832. The shikimate kinase stretch occupies residues 875 to 1070; sequence AASIILIGMR…TSGRRSYFLC (196 aa). 882-889 lines the ATP pocket; it reads GMRGTGKT. Residues 1071–1296 are 3-dehydroquinase; it reads LTYPDVTQSF…AAPGQLSFKQ (226 aa). The active-site Proton acceptor; for 3-dehydroquinate dehydratase activity is the His-1198. Residue Lys-1226 is the Schiff-base intermediate with substrate; for 3-dehydroquinate dehydratase activity of the active site. Residues 1309-1606 form a shikimate dehydrogenase region; that stretch reads AQRFYLFGTP…QFVFEEECES (298 aa).

It in the N-terminal section; belongs to the sugar phosphate cyclases superfamily. Dehydroquinate synthase family. In the 2nd section; belongs to the EPSP synthase family. The protein in the 3rd section; belongs to the shikimate kinase family. This sequence in the 4th section; belongs to the type-I 3-dehydroquinase family. It in the C-terminal section; belongs to the shikimate dehydrogenase family. As to quaternary structure, homodimer. The cofactor is Zn(2+).

Its subcellular location is the cytoplasm. The enzyme catalyses 7-phospho-2-dehydro-3-deoxy-D-arabino-heptonate = 3-dehydroquinate + phosphate. It catalyses the reaction 3-dehydroquinate = 3-dehydroshikimate + H2O. The catalysed reaction is shikimate + NADP(+) = 3-dehydroshikimate + NADPH + H(+). It carries out the reaction shikimate + ATP = 3-phosphoshikimate + ADP + H(+). The enzyme catalyses 3-phosphoshikimate + phosphoenolpyruvate = 5-O-(1-carboxyvinyl)-3-phosphoshikimate + phosphate. Its pathway is metabolic intermediate biosynthesis; chorismate biosynthesis; chorismate from D-erythrose 4-phosphate and phosphoenolpyruvate: step 2/7. It participates in metabolic intermediate biosynthesis; chorismate biosynthesis; chorismate from D-erythrose 4-phosphate and phosphoenolpyruvate: step 3/7. The protein operates within metabolic intermediate biosynthesis; chorismate biosynthesis; chorismate from D-erythrose 4-phosphate and phosphoenolpyruvate: step 4/7. It functions in the pathway metabolic intermediate biosynthesis; chorismate biosynthesis; chorismate from D-erythrose 4-phosphate and phosphoenolpyruvate: step 5/7. Its pathway is metabolic intermediate biosynthesis; chorismate biosynthesis; chorismate from D-erythrose 4-phosphate and phosphoenolpyruvate: step 6/7. In terms of biological role, the AROM polypeptide catalyzes 5 consecutive enzymatic reactions in prechorismate polyaromatic amino acid biosynthesis. This is Pentafunctional AROM polypeptide from Laccaria bicolor (strain S238N-H82 / ATCC MYA-4686) (Bicoloured deceiver).